We begin with the raw amino-acid sequence, 158 residues long: Small ribosomal subunit protein uS19 (158 aa).

The protein belongs to the universal ribosomal protein uS19 family.

Its function is as follows. Protein S19 forms a complex with S13 that binds strongly to the 16S ribosomal RNA. In Pyrobaculum calidifontis (strain DSM 21063 / JCM 11548 / VA1), this protein is Small ribosomal subunit protein uS19.